The primary structure comprises 237 residues: tRNA (guanine-N(7)-)-methyltransferase (237 aa).

Residues Glu68, Glu93, Asp120, and Asp143 each contribute to the S-adenosyl-L-methionine site. Residue Asp143 is part of the active site. Residues Lys147, Asp179, and 216–219 (TKFE) contribute to the substrate site.

This sequence belongs to the class I-like SAM-binding methyltransferase superfamily. TrmB family.

The enzyme catalyses guanosine(46) in tRNA + S-adenosyl-L-methionine = N(7)-methylguanosine(46) in tRNA + S-adenosyl-L-homocysteine. It functions in the pathway tRNA modification; N(7)-methylguanine-tRNA biosynthesis. Catalyzes the formation of N(7)-methylguanine at position 46 (m7G46) in tRNA. The polypeptide is tRNA (guanine-N(7)-)-methyltransferase (Shewanella piezotolerans (strain WP3 / JCM 13877)).